We begin with the raw amino-acid sequence, 196 residues long: Pyridoxal 5'-phosphate synthase subunit PdxT (196 aa).

47–49 provides a ligand contact to L-glutamine; it reads GES. Residue cysteine 79 is the Nucleophile of the active site. L-glutamine-binding positions include arginine 106 and 134–135; that span reads IR. Catalysis depends on charge relay system residues histidine 170 and glutamate 172.

This sequence belongs to the glutaminase PdxT/SNO family. As to quaternary structure, in the presence of PdxS, forms a dodecamer of heterodimers. Only shows activity in the heterodimer.

It catalyses the reaction aldehydo-D-ribose 5-phosphate + D-glyceraldehyde 3-phosphate + L-glutamine = pyridoxal 5'-phosphate + L-glutamate + phosphate + 3 H2O + H(+). It carries out the reaction L-glutamine + H2O = L-glutamate + NH4(+). It participates in cofactor biosynthesis; pyridoxal 5'-phosphate biosynthesis. Catalyzes the hydrolysis of glutamine to glutamate and ammonia as part of the biosynthesis of pyridoxal 5'-phosphate. The resulting ammonia molecule is channeled to the active site of PdxS. In Bacillus velezensis (strain DSM 23117 / BGSC 10A6 / LMG 26770 / FZB42) (Bacillus amyloliquefaciens subsp. plantarum), this protein is Pyridoxal 5'-phosphate synthase subunit PdxT.